A 453-amino-acid chain; its full sequence is Carbamoyl phosphate synthase arginine-specific small chain (453 aa).

The transit peptide at 1–28 (MFARVFKAMPARAPAFTSVNASIQSRFM) directs the protein to the mitochondrion. Residues 219–406 (HVAVIDCGVK…LDSVVKYKNH (188 aa)) enclose the Glutamine amidotransferase type-1 domain. The active-site Nucleophile is cysteine 295. Active-site residues include histidine 379 and glutamate 381.

This sequence belongs to the CarA family. As to quaternary structure, heterodimer composed of 2 chains; the small (or glutamine) chain promotes the hydrolysis of glutamine to ammonia, which is used by the large (or ammonia) chain to synthesize carbamoyl phosphate.

Its subcellular location is the mitochondrion matrix. It catalyses the reaction hydrogencarbonate + L-glutamine + 2 ATP + H2O = carbamoyl phosphate + L-glutamate + 2 ADP + phosphate + 2 H(+). It carries out the reaction L-glutamine + H2O = L-glutamate + NH4(+). The protein operates within amino-acid biosynthesis; L-arginine biosynthesis; carbamoyl phosphate from bicarbonate: step 1/1. Small subunit of the arginine-specific carbamoyl phosphate synthase (CPSase). CPSase catalyzes the formation of carbamoyl phosphate from the ammonia moiety of glutamine, carbonate, and phosphate donated by ATP, the first step of the arginine biosynthetic pathway. The small subunit (glutamine amidotransferase) binds and cleaves glutamine to supply the large subunit with the substrate ammonia. The chain is Carbamoyl phosphate synthase arginine-specific small chain (cpa1) from Aspergillus niger (strain ATCC MYA-4892 / CBS 513.88 / FGSC A1513).